Reading from the N-terminus, the 363-residue chain is Holliday junction branch migration complex subunit RuvB (363 aa).

The tract at residues 1–44 is disordered; that stretch reads MAIKRNQGHGLPPKRDPALGRDALTTSQALPEDQEQSANEDRIR. A large ATPase domain (RuvB-L) region spans residues 13–204; the sequence is PKRDPALGRD…FGLIQRLRFY (192 aa). Ile-43, Arg-44, Gly-85, Lys-88, Thr-89, Thr-90, Arg-194, Tyr-204, and Arg-241 together coordinate ATP. Thr-89 provides a ligand contact to Mg(2+). Residues 205–275 are small ATPAse domain (RuvB-S); sequence EVDELIAIVH…VAATALDLYN (71 aa). The tract at residues 278 to 363 is head domain (RuvB-H); the sequence is ALGLDWTDRL…EQSTQLDFLP (86 aa). 2 residues coordinate DNA: Arg-333 and Arg-338.

The protein belongs to the RuvB family. In terms of assembly, homohexamer. Forms an RuvA(8)-RuvB(12)-Holliday junction (HJ) complex. HJ DNA is sandwiched between 2 RuvA tetramers; dsDNA enters through RuvA and exits via RuvB. An RuvB hexamer assembles on each DNA strand where it exits the tetramer. Each RuvB hexamer is contacted by two RuvA subunits (via domain III) on 2 adjacent RuvB subunits; this complex drives branch migration. In the full resolvosome a probable DNA-RuvA(4)-RuvB(12)-RuvC(2) complex forms which resolves the HJ.

The protein resides in the cytoplasm. It carries out the reaction ATP + H2O = ADP + phosphate + H(+). In terms of biological role, the RuvA-RuvB-RuvC complex processes Holliday junction (HJ) DNA during genetic recombination and DNA repair, while the RuvA-RuvB complex plays an important role in the rescue of blocked DNA replication forks via replication fork reversal (RFR). RuvA specifically binds to HJ cruciform DNA, conferring on it an open structure. The RuvB hexamer acts as an ATP-dependent pump, pulling dsDNA into and through the RuvAB complex. RuvB forms 2 homohexamers on either side of HJ DNA bound by 1 or 2 RuvA tetramers; 4 subunits per hexamer contact DNA at a time. Coordinated motions by a converter formed by DNA-disengaged RuvB subunits stimulates ATP hydrolysis and nucleotide exchange. Immobilization of the converter enables RuvB to convert the ATP-contained energy into a lever motion, pulling 2 nucleotides of DNA out of the RuvA tetramer per ATP hydrolyzed, thus driving DNA branch migration. The RuvB motors rotate together with the DNA substrate, which together with the progressing nucleotide cycle form the mechanistic basis for DNA recombination by continuous HJ branch migration. Branch migration allows RuvC to scan DNA until it finds its consensus sequence, where it cleaves and resolves cruciform DNA. This chain is Holliday junction branch migration complex subunit RuvB, found in Picosynechococcus sp. (strain ATCC 27264 / PCC 7002 / PR-6) (Agmenellum quadruplicatum).